We begin with the raw amino-acid sequence, 2292 residues long: Protein Ycf2 (2292 aa).

ATP is bound at residue 1644–1651 (GSIGTGRS).

It belongs to the Ycf2 family.

It localises to the plastid. Its subcellular location is the chloroplast stroma. Functionally, probable ATPase of unknown function. Its presence in a non-photosynthetic plant (Epifagus virginiana) and experiments in tobacco indicate that it has an essential function which is probably not related to photosynthesis. The polypeptide is Protein Ycf2 (Morus indica (Mulberry)).